A 299-amino-acid chain; its full sequence is tRNA dimethylallyltransferase (299 aa).

ATP is bound at residue 11-18 (GPTAVGKT). 13–18 (TAVGKT) lines the substrate pocket. An interaction with substrate tRNA region spans residues 36 to 39 (DSQQ).

The protein belongs to the IPP transferase family. As to quaternary structure, monomer. Mg(2+) is required as a cofactor.

It catalyses the reaction adenosine(37) in tRNA + dimethylallyl diphosphate = N(6)-dimethylallyladenosine(37) in tRNA + diphosphate. Functionally, catalyzes the transfer of a dimethylallyl group onto the adenine at position 37 in tRNAs that read codons beginning with uridine, leading to the formation of N6-(dimethylallyl)adenosine (i(6)A). The polypeptide is tRNA dimethylallyltransferase (Streptococcus pyogenes serotype M28 (strain MGAS6180)).